We begin with the raw amino-acid sequence, 674 residues long: DNA ligase (674 aa).

NAD(+) is bound by residues 35–39 (DAEYD), 82–83 (SL), and glutamate 116. Lysine 118 functions as the N6-AMP-lysine intermediate in the catalytic mechanism. Arginine 139, glutamate 174, lysine 282, and lysine 306 together coordinate NAD(+). Cysteine 400, cysteine 403, cysteine 418, and cysteine 424 together coordinate Zn(2+). The 82-residue stretch at 593–674 (SYVSLIHGKT…WLQYIQPNKV (82 aa)) folds into the BRCT domain.

It belongs to the NAD-dependent DNA ligase family. LigA subfamily. The cofactor is Mg(2+). Requires Mn(2+) as cofactor.

It catalyses the reaction NAD(+) + (deoxyribonucleotide)n-3'-hydroxyl + 5'-phospho-(deoxyribonucleotide)m = (deoxyribonucleotide)n+m + AMP + beta-nicotinamide D-nucleotide.. Its function is as follows. DNA ligase that catalyzes the formation of phosphodiester linkages between 5'-phosphoryl and 3'-hydroxyl groups in double-stranded DNA using NAD as a coenzyme and as the energy source for the reaction. It is essential for DNA replication and repair of damaged DNA. The protein is DNA ligase of Ehrlichia ruminantium (strain Welgevonden).